The primary structure comprises 174 residues: Inosine/xanthosine triphosphatase (174 aa).

D68 is a Mg(2+) binding site. Residue 68–69 (DA) participates in substrate binding.

The protein belongs to the YjjX NTPase family. As to quaternary structure, homodimer. Requires Mg(2+) as cofactor. Mn(2+) is required as a cofactor.

It catalyses the reaction XTP + H2O = XDP + phosphate + H(+). It carries out the reaction ITP + H2O = IDP + phosphate + H(+). In terms of biological role, phosphatase that hydrolyzes non-canonical purine nucleotides such as XTP and ITP to their respective diphosphate derivatives. Probably excludes non-canonical purines from DNA/RNA precursor pool, thus preventing their incorporation into DNA/RNA and avoiding chromosomal lesions. This Photobacterium profundum (strain SS9) protein is Inosine/xanthosine triphosphatase.